The chain runs to 151 residues: S-ribosylhomocysteine lyase (151 aa).

Residues His54, His58, and Cys121 each contribute to the Fe cation site.

Belongs to the LuxS family. Homodimer. Requires Fe cation as cofactor.

It carries out the reaction S-(5-deoxy-D-ribos-5-yl)-L-homocysteine = (S)-4,5-dihydroxypentane-2,3-dione + L-homocysteine. In terms of biological role, involved in the synthesis of autoinducer 2 (AI-2) which is secreted by bacteria and is used to communicate both the cell density and the metabolic potential of the environment. The regulation of gene expression in response to changes in cell density is called quorum sensing. Catalyzes the transformation of S-ribosylhomocysteine (RHC) to homocysteine (HC) and 4,5-dihydroxy-2,3-pentadione (DPD). The chain is S-ribosylhomocysteine lyase from Clostridioides difficile (strain 630) (Peptoclostridium difficile).